Consider the following 92-residue polypeptide: Conotoxin Im9.4 (92 aa).

The signal sequence occupies residues 1-20; the sequence is MHRSLAGSAVLMLLLLFALG. The propeptide occupies 21–62; it reads NFVGVQPGLVTRDADNGQLMDNRRNLRLERKTMSLFKSLDKR. Disulfide bonds link Cys65–Cys79, Cys69–Cys81, and Cys75–Cys87. Asn90 carries the asparagine amide modification.

This sequence belongs to the conotoxin P superfamily. As to expression, expressed by the venom duct.

Its subcellular location is the secreted. Its function is as follows. Probable neurotoxin that inhibits ion channels. The polypeptide is Conotoxin Im9.4 (Conus imperialis (Imperial cone)).